A 255-amino-acid chain; its full sequence is 3-deoxy-manno-octulosonate cytidylyltransferase (255 aa).

It belongs to the KdsB family.

It is found in the cytoplasm. The enzyme catalyses 3-deoxy-alpha-D-manno-oct-2-ulosonate + CTP = CMP-3-deoxy-beta-D-manno-octulosonate + diphosphate. It functions in the pathway nucleotide-sugar biosynthesis; CMP-3-deoxy-D-manno-octulosonate biosynthesis; CMP-3-deoxy-D-manno-octulosonate from 3-deoxy-D-manno-octulosonate and CTP: step 1/1. The protein operates within bacterial outer membrane biogenesis; lipopolysaccharide biosynthesis. In terms of biological role, activates KDO (a required 8-carbon sugar) for incorporation into bacterial lipopolysaccharide in Gram-negative bacteria. This is 3-deoxy-manno-octulosonate cytidylyltransferase from Polaromonas sp. (strain JS666 / ATCC BAA-500).